The following is a 427-amino-acid chain: BSD domain-containing protein 1 (427 aa).

2 positions are modified to phosphoserine: S92 and S166. One can recognise a BSD domain in the interval 146 to 198 (WLSEFCLEEKKGEISELLVGSPSIRALYTKMVPAAVSHSEFWHRYFYKVHQLE). The disordered stretch occupies residues 208–397 (KQRADQSISE…ISEDWEKDFD (190 aa)). Positions 219-229 (PGWEEEEEELE) are enriched in acidic residues. A compositionally biased stretch (basic and acidic residues) spans 236 to 245 (KEAKIPKETK). A compositionally biased stretch (low complexity) spans 268–279 (PAEATPSESSES). Pro residues predominate over residues 324–333 (GPPPPPPSKP). Residues 347–364 (PPARVETLREEVPTDLRV) are compositionally biased toward basic and acidic residues. T353 carries the phosphothreonine modification. Residues 368–387 (NSDSGKSTPSNNGKKGSSTD) are compositionally biased toward polar residues. Phosphoserine occurs at positions 384 and 385. Over residues 388–397 (ISEDWEKDFD) the composition is skewed to acidic residues. S415 is modified (phosphoserine).

The polypeptide is BSD domain-containing protein 1 (Bsdc1) (Mus musculus (Mouse)).